Here is a 584-residue protein sequence, read N- to C-terminus: Delta 8-(E)-sphingolipid desaturase (584 aa).

One can recognise a Cytochrome b5 heme-binding domain in the interval 7 to 82 (KKIFTRSQII…FTRFKIGEIE (76 aa)). Heme-binding residues include histidine 42 and histidine 65. The segment at 109 to 134 (NKNTSNKKTLDSKLDNDSSNSTSDLE) is disordered. The helical transmembrane segment at 261-281 (LFLYSLSFLKINQLFLSAVFM) threads the bilayer. Residues 293 to 297 (HDAGH) carry the Histidine box-1 motif. The chain crosses the membrane as a helical span at residues 306–326 (IDNIFGMLIADWFGGLSLGWW). The short motif at 330–334 (HNVHH) is the Histidine box-2 element. A run of 3 helical transmembrane segments spans residues 386–403 (YLYYPILCFGRFNLYRLS), 423–443 (YFEFFGLSFFFYWFFYLLVFK), and 455–475 (VMVSHITTMLVHVQITLSHFA). Positions 514–518 (QAIHH) match the Histidine box-3 motif.

Belongs to the fatty acid desaturase type 1 family.

It is found in the membrane. The catalysed reaction is an N-acylsphing-4-enine + 2 Fe(II)-[cytochrome b5] + O2 + 2 H(+) = a (4E,8E)-4-sphinga-4,8-dienine ceramide + 2 Fe(III)-[cytochrome b5] + 2 H2O. Its pathway is lipid metabolism; sphingolipid metabolism. Delta(8)-fatty-acid desaturase which introduces a double bond at the 8-position in the long-chain base (LCB) of ceramides. Required for the formation of the di-unsaturated sphingoid base (E,E)-sphinga-4,8-dienine during glucosylceramide (GluCer) biosynthesis. In Candida albicans (strain SC5314 / ATCC MYA-2876) (Yeast), this protein is Delta 8-(E)-sphingolipid desaturase.